A 647-amino-acid chain; its full sequence is Paraneoplastic antigen Ma6E (647 aa).

4 disordered regions span residues 111-199, 227-254, 508-580, and 608-647; these read QPQG…AGGA, GAAG…RAAG, AAAP…VPWG, and RGQE…SQGK. Gly residues-rich tracts occupy residues 122–149, 158–199, and 227–251; these read GEGG…GEAG, GEAG…AGGA, and GAAG…GEGR. The segment covering 517–570 has biased composition (low complexity); sequence PAAAQASPAQGNASEAGPGAEDAAEAASATKEAARGAPAAGEGESAPAGPEGLG. Residues 625–636 show a composition bias toward acidic residues; sequence EEPENEDEDGAG.

This chain is Paraneoplastic antigen Ma6E, found in Homo sapiens (Human).